The chain runs to 224 residues: Large ribosomal subunit protein bL25 (224 aa).

Belongs to the bacterial ribosomal protein bL25 family. CTC subfamily. As to quaternary structure, part of the 50S ribosomal subunit; part of the 5S rRNA/L5/L18/L25 subcomplex. Contacts the 5S rRNA. Binds to the 5S rRNA independently of L5 and L18.

This is one of the proteins that binds to the 5S RNA in the ribosome where it forms part of the central protuberance. The sequence is that of Large ribosomal subunit protein bL25 from Psychrobacter arcticus (strain DSM 17307 / VKM B-2377 / 273-4).